The sequence spans 333 residues: Uroporphyrinogen decarboxylase (333 aa).

Substrate-binding positions include 21–25 (RQVGR), Asp70, Tyr139, Ser194, and His309.

The protein belongs to the uroporphyrinogen decarboxylase family. As to quaternary structure, homodimer.

Its subcellular location is the cytoplasm. The catalysed reaction is uroporphyrinogen III + 4 H(+) = coproporphyrinogen III + 4 CO2. The protein operates within porphyrin-containing compound metabolism; protoporphyrin-IX biosynthesis; coproporphyrinogen-III from 5-aminolevulinate: step 4/4. Its function is as follows. Catalyzes the decarboxylation of four acetate groups of uroporphyrinogen-III to yield coproporphyrinogen-III. This Chlamydia abortus (strain DSM 27085 / S26/3) (Chlamydophila abortus) protein is Uroporphyrinogen decarboxylase.